We begin with the raw amino-acid sequence, 251 residues long: Fibroblast growth factor-binding protein 1 (251 aa).

A signal peptide spans 1-20 (MRLHSLILLSFLLLATQAFS). The disordered stretch occupies residues 25 to 62 (KRAKNAPHSTAEEGVEGSAPSLGKAQNKQRSRTSKSLT). Disulfide bonds link C74/C91, C100/C133, and C109/C145. Positions 160–189 (NARGNTKPRKEKAEVSAREHNKVQEAVSTE) are disordered. A compositionally biased stretch (basic and acidic residues) spans 170 to 182 (EKAEVSAREHNKV). S175 carries O-linked (GalNAc...) serine glycosylation. The interval 210–251 (RDPECLEDPDVLNQRKTALEFCGESWSSICTFFLNMLQATSC) is sufficient for interaction with FGF2 and FGF2-induced effects. Cystine bridges form between C214-C251 and C231-C239.

This sequence belongs to the fibroblast growth factor-binding protein family. Found in a complex with FGFBP1, FGF1 and FGF2. Interacts with FGF1, FGF7, FGF10, FGF22 and HSPG2. Interacts with FGF2. As to expression, expressed in intestine, ovary, lung, placenta and normal and wounded skin.

The protein resides in the secreted. Its subcellular location is the extracellular space. The protein localises to the cell membrane. Acts as a carrier protein that releases fibroblast-binding factors (FGFs) from the extracellular matrix (EM) storage and thus enhances the mitogenic activity of FGFs. Enhances FGF2 signaling during tissue repair, angiogenesis and in tumor growth. This chain is Fibroblast growth factor-binding protein 1 (Fgfbp1), found in Mus musculus (Mouse).